We begin with the raw amino-acid sequence, 247 residues long: 2,3-bisphosphoglycerate-dependent phosphoglycerate mutase (247 aa).

Substrate contacts are provided by residues 7–14 (RHGESEWN), 20–21 (TG), arginine 59, 86–89 (ERHY), lysine 97, 113–114 (RR), and 182–183 (GN). The Tele-phosphohistidine intermediate role is filled by histidine 8. Catalysis depends on glutamate 86, which acts as the Proton donor/acceptor.

This sequence belongs to the phosphoglycerate mutase family. BPG-dependent PGAM subfamily.

It catalyses the reaction (2R)-2-phosphoglycerate = (2R)-3-phosphoglycerate. It functions in the pathway carbohydrate degradation; glycolysis; pyruvate from D-glyceraldehyde 3-phosphate: step 3/5. In terms of biological role, catalyzes the interconversion of 2-phosphoglycerate and 3-phosphoglycerate. This Treponema denticola (strain ATCC 35405 / DSM 14222 / CIP 103919 / JCM 8153 / KCTC 15104) protein is 2,3-bisphosphoglycerate-dependent phosphoglycerate mutase.